Consider the following 1200-residue polypeptide: MNLDKALVLRTCANNMADHCGLIWPASGTVESRYWQSTRRHENGLVGLLWGAGTSAFLSVHADARWIVCEVAVADIISLEEPGMVKFPRAEVVHVGDRISASHFISARQADPASTSTSTLTPMPTAIPTPMPAVASVTLPVAEQARHEVFDVASVSAAAAPVNTLPVTTPQNVQTATYGSTLSGDNHSRLIAGYGSNETAGNHSDLIAGYGSTGTAGSDSWLVAGYGSTQTAGGDSALTAGYGSTQTAREGSNLTAGYGSTGTAGSDSSLIAGYGSTQTSGGDSSLTAGYGSTQTAQEGSNLTAGYGSTGTAGSDSSLIAGYGSTQTSGGDSSLTAGYGSTQTAQEGSNLTAGYGSTGTAGVDSSLIAGYGSTQTSGSDSALTAGYGSTQTAQEGSNLTAGYGSTGTAGSDSSLIAGYGSTQTSGSDSSLTAGYGSTQTAQEGSILTAGYGSTGTAGVDSSLIAGYGSTQTSGSDSALTAGYGSTQTAQEGSNLTAGYGSTGTAGADSSLIAGYGSTQTSGSESSLTAGYGSTQTAREGSTLTAGYGSTGTAGADSSLIAGYGSTQTSGSESSLTAGYGSTQTAQQGSVLTSGYGSTQTAGAASNLTTGYGSTGTAGHESFIIAGYGSTQTAGHKSILTAGYGSTQTARDGSDLIAGYGSTGTAGSGSSLIAGYGSTQTASYRSMLTAGYGSTQTAREHSDLVTGYGSTSTAGSNSSLIAGYGSTQTAGFKSILTAGYGSTQTAQERTSLVAGYGSTSTAGYSSSLIAGYGSTQTAGYESTLTAGYGSTQTAQENSSLTTGYGSTSTAGYSSSLIAGYGSTQTAGYESTLTAGYGSTQTAQERSDLVTGYGSTSTAGYASSLIAGYGSTQTAGYESTLTAGYGSTQTAQENSSLTTGYGSTSTAGFASSLISGYGSTQTAGYKSTLTAGYGSTQTAEYGSSLTAGYGSTATAGQDSSLIAGYGSSLTSGIRSFLTAGYGSTLIAGLRSVLIAGYGSSLTSGVRSTLTAGYGSNQIASYGSSLIAGHESIQVAGNKSMLIAGKGSSQTAGFRSTLIAGAGSVQLAGDRSRLIAGADSNQTAGDRSKLLAGNNSYLTAGDRSKLTGGHDCTLMAGDQSRLTAGKNSVLTAGARSKLIGSEGSTLSAGEDSILIFRLWDGKRYRQLVARTGENGVEADIPYYVNEDDDIVDKPDEDDDWIEVK.

The octapeptide periodicity stretch occupies residues 176 to 1151 (ATYGSTLSGD…LSAGEDSILI (976 aa)).

The protein belongs to the bacterial ice nucleation protein family.

It localises to the cell outer membrane. Its function is as follows. Ice nucleation proteins enable bacteria to nucleate crystallization in supercooled water. This chain is Ice nucleation protein (inaZ), found in Pseudomonas syringae pv. syringae.